The primary structure comprises 360 residues: Phospho-N-acetylmuramoyl-pentapeptide-transferase (360 aa).

The next 10 membrane-spanning stretches (helical) occupy residues 24 to 44, 69 to 89, 92 to 112, 133 to 153, 158 to 178, 199 to 219, 239 to 259, 263 to 283, 288 to 308, and 337 to 357; these read RAVM…PWTI, GTPT…TLLW, WANP…ALGF, MVWQ…LAAN, ILIV…GFLV, GLAT…AYAS, VVIF…FNAY, VFMG…VAVI, FVLV…MLQV, and QVVV…LSTL.

This sequence belongs to the glycosyltransferase 4 family. MraY subfamily. It depends on Mg(2+) as a cofactor.

Its subcellular location is the cell inner membrane. It catalyses the reaction UDP-N-acetyl-alpha-D-muramoyl-L-alanyl-gamma-D-glutamyl-meso-2,6-diaminopimeloyl-D-alanyl-D-alanine + di-trans,octa-cis-undecaprenyl phosphate = di-trans,octa-cis-undecaprenyl diphospho-N-acetyl-alpha-D-muramoyl-L-alanyl-D-glutamyl-meso-2,6-diaminopimeloyl-D-alanyl-D-alanine + UMP. It functions in the pathway cell wall biogenesis; peptidoglycan biosynthesis. In terms of biological role, catalyzes the initial step of the lipid cycle reactions in the biosynthesis of the cell wall peptidoglycan: transfers peptidoglycan precursor phospho-MurNAc-pentapeptide from UDP-MurNAc-pentapeptide onto the lipid carrier undecaprenyl phosphate, yielding undecaprenyl-pyrophosphoryl-MurNAc-pentapeptide, known as lipid I. This chain is Phospho-N-acetylmuramoyl-pentapeptide-transferase, found in Neisseria meningitidis serogroup C / serotype 2a (strain ATCC 700532 / DSM 15464 / FAM18).